Here is a 532-residue protein sequence, read N- to C-terminus: Amidophosphoribosyltransferase 3, chloroplastic (532 aa).

A chloroplast-targeting transit peptide spans 1 to 59; sequence MAFSVEEISSILPNSLSANPRNVSQNTISPSFFKPSLKPYASKTLISLSCRRSLSPVFS. C77 (nucleophile) is an active-site residue. In terms of domain architecture, Glutamine amidotransferase type-2 spans 77-296; that stretch reads CGVVGIHGDP…PGEIVVVDRN (220 aa). 4 residues coordinate [4Fe-4S] cluster: C313, C459, C511, and C514.

This sequence in the C-terminal section; belongs to the purine/pyrimidine phosphoribosyltransferase family. It depends on [4Fe-4S] cluster as a cofactor. Mg(2+) serves as cofactor. In terms of tissue distribution, mostly expressed at low levels in leaves, and, to a lower extent, in cotyledons.

The protein resides in the plastid. Its subcellular location is the chloroplast stroma. The enzyme catalyses 5-phospho-beta-D-ribosylamine + L-glutamate + diphosphate = 5-phospho-alpha-D-ribose 1-diphosphate + L-glutamine + H2O. The protein operates within purine metabolism; IMP biosynthesis via de novo pathway; N(1)-(5-phospho-D-ribosyl)glycinamide from 5-phospho-alpha-D-ribose 1-diphosphate: step 1/2. With respect to regulation, inhibited by the phenyltriazole acetic acid compound [5-(4-chlorophenyl)-1-isopropyl-1H-[1,2,4]triazol-3-yl]-acetic acid (DAS734), a bleaching herbicide. Repressed by AMP, ADP, ATP and GTP, and slightly by GMP. Catalyzes the first committed step of 'de novo' purine biosynthesis from glutamine. The sequence is that of Amidophosphoribosyltransferase 3, chloroplastic (ASE3) from Arabidopsis thaliana (Mouse-ear cress).